Consider the following 318-residue polypeptide: Transcription factor FER-LIKE IRON DEFICIENCY-INDUCED TRANSCRIPTION FACTOR (318 aa).

A disordered region spans residues 90 to 138; the sequence is FDGDSVRAGGEEDEEDYNDGDDSSATTTNNDGTRKTKTDRSRTLISERR. The segment covering 100–111 has biased composition (acidic residues); sequence EEDEEDYNDGDD. Basic and acidic residues predominate over residues 121 to 136; it reads GTRKTKTDRSRTLISE. The region spanning 127 to 176 is the bHLH domain; the sequence is TDRSRTLISERRRRGRMKDKLYALRSLVPNITKMDKASIVGDAVLYVQEL.

In terms of assembly, homodimer. Expressed in roots and inflorescence, and to a lower extent, in leaves and stems. In roots, confined to the outer cell layers, specifically in the differentiation zone. Also detected in the endodermis and inner tissues of the central cylinder.

It is found in the nucleus. Transcription factor. Essential protein involved in iron uptake responses. Regulates FRO2 at the level of mRNA accumulation and IRT1 at the level of protein accumulation. Confers enhanced iron mobilization responses at low iron supply. This is Transcription factor FER-LIKE IRON DEFICIENCY-INDUCED TRANSCRIPTION FACTOR (FIT) from Arabidopsis thaliana (Mouse-ear cress).